The primary structure comprises 327 residues: 2-methoxy-6-polyprenyl-1,4-benzoquinol methylase, mitochondrial (327 aa).

The transit peptide at 1–42 (MAAPGSCALWSYCGRGWSRAMRGCQLLGLRSSWPGDLLSARL) directs the protein to the mitochondrion. Residues Thr-117, Asp-171, and 199–200 (DA) each bind S-adenosyl-L-methionine.

It belongs to the class I-like SAM-binding methyltransferase superfamily. MenG/UbiE family. Component of a multi-subunit COQ enzyme complex, composed of at least COQ3, COQ4, COQ5, COQ6, COQ7 and COQ9. Interacts with PYURF; the interaction is direct, stabilizes COQ5 protein and associates PYURF with COQ enzyme complex. Widely expressed, with highest levels in liver, lung, placenta and skeletal muscle.

Its subcellular location is the mitochondrion inner membrane. The catalysed reaction is 2-methoxy-6-(all-trans-decaprenyl)benzene-1,4-diol + S-adenosyl-L-methionine = 5-methoxy-2-methyl-3-(all-trans-decaprenyl)benzene-1,4-diol + S-adenosyl-L-homocysteine + H(+). Its pathway is cofactor biosynthesis; ubiquinone biosynthesis. Methyltransferase required for the conversion of 2-decaprenyl-6-methoxy-1,4-benzoquinol (DDMQH2) to 2-decaprenyl-3-methyl-6-methoxy-1,4-benzoquinol (DMQH2). The chain is 2-methoxy-6-polyprenyl-1,4-benzoquinol methylase, mitochondrial from Homo sapiens (Human).